The sequence spans 675 residues: Pesticidal crystal protein Cry10Aa (675 aa).

It belongs to the delta endotoxin family.

Promotes colloidosmotic lysis by binding to the midgut epithelial cells of mosquitos. Active on Aedes aegypti. The chain is Pesticidal crystal protein Cry10Aa (cry10Aa) from Bacillus thuringiensis subsp. israelensis.